Reading from the N-terminus, the 68-residue chain is Adipokinetic prohormone type 1 (68 aa).

A signal peptide spans 1-20 (MNYVSIFVLIVACLCVLADA). Gln21 bears the Pyrrolidone carboxylic acid mark. A Glycine amide modification is found at Gly30. Residues 34–68 (GAVAATMSCRSEETIAAIYKLIQNEAERLLLCQKP) constitute a propeptide that is removed on maturation.

As to expression, expressed in antennal lobe (AL), corpora cardiaca (CC), corpora allata (CA) and gnathal ganglion (GNG) (at protein level). Expression in CC and CA detected in all animals, expression in GNG in some animals and in AL in few animals (at protein level).

The protein localises to the secreted. Its function is as follows. This hormone, released from cells in the corpora cardiaca, causes release of diglycerides from the fat body and stimulation of muscles to use these diglycerides as an energy source during energy-demanding processes. The sequence is that of Adipokinetic prohormone type 1 from Agrotis ipsilon (Black cutworm moth).